Reading from the N-terminus, the 264-residue chain is MEMO1 family protein Mbur_2394 (264 aa).

The protein belongs to the MEMO1 family.

The sequence is that of MEMO1 family protein Mbur_2394 from Methanococcoides burtonii (strain DSM 6242 / NBRC 107633 / OCM 468 / ACE-M).